The chain runs to 229 residues: Imidazoleglycerol-phosphate dehydratase (229 aa).

It belongs to the imidazoleglycerol-phosphate dehydratase family.

The enzyme catalyses D-erythro-1-(imidazol-4-yl)glycerol 3-phosphate = 3-(imidazol-4-yl)-2-oxopropyl phosphate + H2O. It participates in amino-acid biosynthesis; L-histidine biosynthesis; L-histidine from 5-phospho-alpha-D-ribose 1-diphosphate: step 6/9. The chain is Imidazoleglycerol-phosphate dehydratase from Neurospora crassa (strain ATCC 24698 / 74-OR23-1A / CBS 708.71 / DSM 1257 / FGSC 987).